Reading from the N-terminus, the 137-residue chain is Large ribosomal subunit protein uL11 (137 aa).

It belongs to the universal ribosomal protein uL11 family. Part of the ribosomal stalk of the 50S ribosomal subunit. Interacts with L10 and the large rRNA to form the base of the stalk. L10 forms an elongated spine to which L12 dimers bind in a sequential fashion forming a multimeric L10(L12)X complex. Post-translationally, one or more lysine residues are methylated.

Its function is as follows. Forms part of the ribosomal stalk which helps the ribosome interact with GTP-bound translation factors. This chain is Large ribosomal subunit protein uL11, found in Mycoplasma pneumoniae (strain ATCC 29342 / M129 / Subtype 1) (Mycoplasmoides pneumoniae).